A 597-amino-acid polypeptide reads, in one-letter code: Elongation factor 4 (597 aa).

The region spanning 2–184 (KHIRNFSIIA…TIVKSIPAPE (183 aa)) is the tr-type G domain. Residues 14-19 (DHGKST) and 131-134 (NKID) each bind GTP.

It belongs to the TRAFAC class translation factor GTPase superfamily. Classic translation factor GTPase family. LepA subfamily.

It localises to the cell inner membrane. It carries out the reaction GTP + H2O = GDP + phosphate + H(+). In terms of biological role, required for accurate and efficient protein synthesis under certain stress conditions. May act as a fidelity factor of the translation reaction, by catalyzing a one-codon backward translocation of tRNAs on improperly translocated ribosomes. Back-translocation proceeds from a post-translocation (POST) complex to a pre-translocation (PRE) complex, thus giving elongation factor G a second chance to translocate the tRNAs correctly. Binds to ribosomes in a GTP-dependent manner. The chain is Elongation factor 4 from Aliivibrio fischeri (strain MJ11) (Vibrio fischeri).